The chain runs to 110 residues: MSQYMDISGIHLYSINGFPIVYINQRRGNNNHRSRSNVMHKCKICEWEIDAASSALFCSMECKFRSVLGSQLDELMENSSEVTEISEEIDEPVMKKRHRRKGSPHRAPFF.

Residues serine 86–phenylalanine 110 form a disordered region. Basic residues predominate over residues lysine 95–proline 104.

This is an uncharacterized protein from Arabidopsis thaliana (Mouse-ear cress).